The chain runs to 261 residues: Indole-3-glycerol phosphate synthase (261 aa).

It belongs to the TrpC family.

The catalysed reaction is 1-(2-carboxyphenylamino)-1-deoxy-D-ribulose 5-phosphate + H(+) = (1S,2R)-1-C-(indol-3-yl)glycerol 3-phosphate + CO2 + H2O. It functions in the pathway amino-acid biosynthesis; L-tryptophan biosynthesis; L-tryptophan from chorismate: step 4/5. The sequence is that of Indole-3-glycerol phosphate synthase from Burkholderia lata (strain ATCC 17760 / DSM 23089 / LMG 22485 / NCIMB 9086 / R18194 / 383).